Consider the following 515-residue polypeptide: Brahma-associated protein of 60 kDa (515 aa).

The segment at 1–124 is disordered; the sequence is MSQRFAPGQA…GGSKSDFATA (124 aa). Residues 17-34 show a composition bias toward pro residues; sequence QPPPPAPGMRPYPPPGAS. The span at 49–62 shows a compositional bias: low complexity; the sequence is PVPGTANVAGVPGV. Residues 90–103 are compositionally biased toward gly residues; sequence TGAGGGGVGSGGGS. The tract at residues 116-204 is DNA-binding; the sequence is GSKSDFATAK…SKEPTNDGEE (89 aa). Residues 291 to 368 enclose the SWIB/MDM2 domain; sequence YQPLQFKLDP…PQRLNPLLHP (78 aa).

In terms of assembly, there are 2 distinct Brahma complexes in the fruit fly, the Brahma-associated proteins (BAP) and Polybromo-containing BAP (PBAP) complexes, which are composed of common subunits Brm, Mor, Snr1/Bap45, Bap111/Dalo, Bap55, Bap60 and Act42A/Bap47, and additional signature subunits osa in the BAP complex and Polybromo and Bap170 in the PBAP complex. Interacts with sisA and sc. Interacts with mor. Interacts with p53. Interacts with erm (via N-terminal). Interacts with akirin; interaction is immune stimulation-dependent; activates selected Rel target gene promoters.

Functionally, involved in the recruitment and site-specific anchoring of the Brahma complex at specific promoter sites. The Brahma complex is a multiprotein complex which is the equivalent of the yeast SWI/SNF complex and acts by remodeling the chromatin by catalyzing an ATP-dependent alteration in the structure of nucleosomal DNA. This complex can both serve as a transcriptional coactivator or corepressor, depending on the context. Participates in X-chromosomal dosage compensation. Participates in neurogenesis. This is Brahma-associated protein of 60 kDa (Bap60) from Drosophila melanogaster (Fruit fly).